Reading from the N-terminus, the 782-residue chain is DnaJ homolog subfamily C member 16 (782 aa).

Residues 1 to 25 (MEVRKLSISWQFLIVLVLILQILSA) form the signal peptide. Topologically, residues 26 to 535 (LDFDPYKVLG…DSIFHNNWRE (510 aa)) are cytoplasmic. Positions 29–93 (DPYKVLGVSR…EKRSNYDQYG (65 aa)) constitute a J domain. In terms of domain architecture, Thioredoxin spans 119–247 (FYFDESFFHF…LRQFVESLLP (129 aa)). The helical; Anchor for type IV membrane protein transmembrane segment at 536-556 (MMPLLSLIFSALFILFGTVIV) threads the bilayer. Residues 557 to 782 (QAFSDSSDER…FYIPSWPELD (226 aa)) are Extracellular-facing. Residues 562-593 (SSDERESSPPDKEEAQEKTGKTEPSFTKENSS) form a disordered region. Residues 563-582 (SDERESSPPDKEEAQEKTGK) are compositionally biased toward basic and acidic residues. Over residues 583 to 593 (TEPSFTKENSS) the composition is skewed to polar residues. A glycan (N-linked (GlcNAc...) asparagine) is linked at N631.

The protein localises to the endoplasmic reticulum membrane. In terms of biological role, plays an important role in regulating the size of autophagosomes during the formation process. This is DnaJ homolog subfamily C member 16 (DNAJC16) from Pongo abelii (Sumatran orangutan).